The primary structure comprises 674 residues: Sodium/hydrogen exchanger 1 (674 aa).

The N-terminal stretch at 1 to 24 is a signal peptide; the sequence is MKLNKSYILIVVLLLSLFYSSVSS. Residues 31–65 form a disordered region; that stretch reads KSNNHYNSDNSNNDNKNININNNNDGDGDDDDDNN. The span at 37–55 shows a compositional bias: low complexity; the sequence is NSDNSNNDNKNININNNND. 12 helical membrane-spanning segments follow: residues 120 to 140, 144 to 164, 175 to 195, 213 to 233, 275 to 297, 314 to 334, 336 to 356, 359 to 379, 401 to 421, 432 to 452, 460 to 480, and 499 to 519; these read TIIFIIMLILTGSVLIVYFII, IPFVPESVAVVTYGIILGIVF, VVSFEPENFFLFILPTIIFET, MFAVFGTIITFLVVGFGIYIV, LYILVLGESILNDATSMMLYSVV, VVAIGSVILGVVMALLLSLIL, WINIGKFPALETIFMVMFSYM, VLAGALDISGVLAVFFFGITL, TAAFISETFLFLYFGLSLTAH, WSILFTCLARAISVFPMCFLL, IPWVIQVAIWFAGLRGAFAFS, and NTLLVVVFTIFVFGMGTYPLL. Residues 591–674 are disordered; the sequence is HELDSNPLRF…NKNNDTLPLI (84 aa). Over residues 601–618 the composition is skewed to acidic residues; it reads DDDEEDDDDEDLDFDSDL. Residues 627–657 are compositionally biased toward low complexity; it reads DSIHQSDNNNNDNGNNNNNNNNIIINNNSQH. Residues 662–674 show a composition bias toward polar residues; the sequence is GSNNKNNDTLPLI.

This sequence belongs to the monovalent cation:proton antiporter 1 (CPA1) transporter (TC 2.A.36) family.

The protein localises to the membrane. LY294002, an inhibitor of the catalytic subunit of PI3-kinase, blocks NHE1-dependent (but not NHE1-independent) increase in intracellular pH in response to cAMP. Regulation of intracellular pH homeostasis in response to cAMP, which is essential for chemotaxis. Necessary for F-actin localization and the kinetics of actin polymerization during chemotaxis and cell polarity but not for directional sensing. This is Sodium/hydrogen exchanger 1 (nhe1) from Dictyostelium discoideum (Social amoeba).